A 99-amino-acid polypeptide reads, in one-letter code: Acylphosphatase-1 (99 aa).

An Acylphosphatase-like domain is found at 9–99; it reads SVDYEVFGKV…LEHSTFSICK (91 aa). Catalysis depends on residues Arg24 and Asn42.

Belongs to the acylphosphatase family.

The catalysed reaction is an acyl phosphate + H2O = a carboxylate + phosphate + H(+). The chain is Acylphosphatase-1 (acyp1) from Xenopus laevis (African clawed frog).